A 67-amino-acid chain; its full sequence is DNA-directed RNA polymerases I, II, and III subunit RPABC5 (67 aa).

The Zn(2+) site is built by C7, C10, C44, and C45.

This sequence belongs to the archaeal Rpo10/eukaryotic RPB10 RNA polymerase subunit family. Component of the RNA polymerase I (Pol I), RNA polymerase II (Pol II) and RNA polymerase III (Pol III) complexes consisting of at least 13, 12 and 17 subunits, respectively.

The protein localises to the nucleus. Its function is as follows. DNA-dependent RNA polymerase catalyzes the transcription of DNA into RNA using the four ribonucleoside triphosphates as substrates. Common component of RNA polymerases I, II and III which synthesize ribosomal RNA precursors, mRNA precursors and many functional non-coding RNAs, and a small RNAs, such as 5S rRNA and tRNAs, respectively. Pol II is the central component of the basal RNA polymerase II transcription machinery. Pols are composed of mobile elements that move relative to each other. In Pol II, Polr2L is part of the core element with the central large cleft. The chain is DNA-directed RNA polymerases I, II, and III subunit RPABC5 from Drosophila melanogaster (Fruit fly).